Here is a 678-residue protein sequence, read N- to C-terminus: uncharacterized protein (678 aa).

The tract at residues 1-26 (MGVHFDDNANTTWEATDPGVSSDCDG) is disordered. The next 9 helical transmembrane spans lie at 119-139 (LLLLIVYCCFWMRIFYSLIYP), 245-265 (SFPCASAVHAGVISPFYGGCT), 317-337 (AAVVALNMLFGLPIFYLYDSI), 340-360 (YWINTIVGYWTLVLSLDPPLL), 371-391 (ELFSVGFQRLLPLCFVLYVVW), 405-425 (IAKVILWYPTFWLGISNNVTF), 443-463 (GALTAVGSIAATILTCAVIQA), 475-495 (YFKIYICFIGGLIALGSLPGL), and 519-539 (AYLFQGILVGLILSGVARWDF).

The protein resides in the vacuole membrane. This is an uncharacterized protein from Saccharomyces cerevisiae (strain ATCC 204508 / S288c) (Baker's yeast).